The chain runs to 394 residues: uncharacterized protein (394 aa).

12 helical membrane-spanning segments follow: residues 13-35, 50-72, 79-97, 107-129, 136-158, 168-190, 218-240, 250-272, 277-299, 309-331, 344-366, and 371-393; these read AIIG…VPVL, VGVA…GWLS, LIIN…IAWS, GRGL…ELVL, IMGL…SPII, FLIN…PASL, INLS…PVEL, VPEI…CICF, VLYS…GIFL, ILGL…ALVN, AIYS…ILFS, and FEVL…LYLI.

This sequence belongs to the major facilitator superfamily.

Its subcellular location is the cell membrane. This is an uncharacterized protein from Buchnera aphidicola subsp. Baizongia pistaciae (strain Bp).